A 329-amino-acid chain; its full sequence is Flotillin-like protein FloA (329 aa).

The next 2 membrane-spanning stretches (helical) occupy residues 4 to 24 (IGFI…FSFV) and 26 to 46 (VGLW…TLVG).

Belongs to the flotillin-like FloA family. Homooligomerizes.

The protein resides in the cell membrane. The protein localises to the membrane raft. Its function is as follows. Found in functional membrane microdomains (FMM) that may be equivalent to eukaryotic membrane rafts. FMMs are highly dynamic and increase in number as cells age. Flotillins are thought to be important factors in membrane fluidity. The protein is Flotillin-like protein FloA of Staphylococcus epidermidis (strain ATCC 35984 / DSM 28319 / BCRC 17069 / CCUG 31568 / BM 3577 / RP62A).